A 543-amino-acid chain; its full sequence is ATP synthase subunit alpha (543 aa).

Glycine 174–threonine 181 is a binding site for ATP. Residues valine 521 to lysine 543 are disordered.

It belongs to the ATPase alpha/beta chains family. In terms of assembly, F-type ATPases have 2 components, CF(1) - the catalytic core - and CF(0) - the membrane proton channel. CF(1) has five subunits: alpha(3), beta(3), gamma(1), delta(1), epsilon(1). CF(0) has three main subunits: a(1), b(2) and c(9-12). The alpha and beta chains form an alternating ring which encloses part of the gamma chain. CF(1) is attached to CF(0) by a central stalk formed by the gamma and epsilon chains, while a peripheral stalk is formed by the delta and b chains.

Its subcellular location is the cell membrane. The catalysed reaction is ATP + H2O + 4 H(+)(in) = ADP + phosphate + 5 H(+)(out). In terms of biological role, produces ATP from ADP in the presence of a proton gradient across the membrane. The alpha chain is a regulatory subunit. This Bifidobacterium longum (strain DJO10A) protein is ATP synthase subunit alpha.